A 1755-amino-acid polypeptide reads, in one-letter code: Transposon Ty1-LR2 Gag-Pol polyprotein (1755 aa).

Composition is skewed to polar residues over residues 1–23, 48–60, and 127–152; these read MESQQLSQHSPISHGSACASVTS, TKANSQQTTTPAS, and QSQFPQYPSSVGTPLSTPSPESGNTF. 3 disordered regions span residues 1–93, 126–174, and 352–421; these read MESQ…MMTQ, PQSQ…PPPM, and GSRN…SKST. The span at 153-165 shows a compositional bias: low complexity; it reads TDSSSADSDMTST. An RNA-binding region spans residues 299 to 401; that stretch reads NNGIHINNKV…NSKSKTARAH (103 aa). The span at 402–418 shows a compositional bias: low complexity; the sequence is NVSTSNNSPSTDNDSIS. Ser416 carries the phosphoserine modification. The active-site For protease activity; shared with dimeric partner is Asp461. Residues 583 to 640 are integrase-type zinc finger-like; that stretch reads NVHTSESTRKYPYPFIHRMLAHANAPTIRYSLKNNTITYFNESDVDWSSAIDYQCPDC. An Integrase catalytic domain is found at 660 to 835; the sequence is NSYEPFQYLH…AGLDISTLLP (176 aa). The Mg(2+) site is built by Asp671 and Asp736. 3 disordered regions span residues 956-1087, 1092-1111, and 1130-1187; these read SKAV…ETEK, RSPSIDASPPENNSSHNIVP, and DLPL…DNET. A compositionally biased stretch (low complexity) spans 960–969; that stretch reads SPTDSTPPST. Positions 1005–1015 are enriched in polar residues; the sequence is STPQISNIEST. Residues 1038 to 1053 are compositionally biased toward basic and acidic residues; the sequence is ESSHASKSKDFRHSDS. 2 stretches are compositionally biased toward polar residues: residues 1054-1082 and 1101-1111; these read YSENETNHTNVPISSTGGTNNKTVPQISD and PENNSSHNIVP. The short motif at 1178–1212 is the Bipartite nuclear localization signal element; that stretch reads KKRSLEDNETEIKVSRDTWNTKNMRSLEPPRSKKR. The region spanning 1338 to 1476 is the Reverse transcriptase Ty1/copia-type domain; that stretch reads NNYYITQLDI…DILGLEIKYQ (139 aa). The Mg(2+) site is built by Asp1346, Asp1427, Asp1428, Asp1610, Glu1652, and Asp1685. The region spanning 1610 to 1752 is the RNase H Ty1/copia-type domain; that stretch reads DASYGNQPYY…IKTFKLLTNK (143 aa).

In terms of assembly, the capsid protein forms a homotrimer, from which the VLPs are assembled. The protease is a homodimer, whose active site consists of two apposed aspartic acid residues. Post-translationally, initially, virus-like particles (VLPs) are composed of the structural unprocessed proteins Gag and Gag-Pol, and also contain the host initiator methionine tRNA (tRNA(i)-Met) which serves as a primer for minus-strand DNA synthesis, and a dimer of genomic Ty RNA. Processing of the polyproteins occurs within the particle and proceeds by an ordered pathway, called maturation. First, the protease (PR) is released by autocatalytic cleavage of the Gag-Pol polyprotein yielding capsid protein p45 and a Pol-p154 precursor protein. This cleavage is a prerequisite for subsequent processing of Pol-p154 at the remaining sites to release the mature structural and catalytic proteins. Maturation takes place prior to the RT reaction and is required to produce transposition-competent VLPs.

The protein resides in the cytoplasm. Its subcellular location is the nucleus. The catalysed reaction is DNA(n) + a 2'-deoxyribonucleoside 5'-triphosphate = DNA(n+1) + diphosphate. It catalyses the reaction Endonucleolytic cleavage to 5'-phosphomonoester.. Its function is as follows. Capsid protein (CA) is the structural component of the virus-like particle (VLP), forming the shell that encapsulates the retrotransposons dimeric RNA genome. The particles are assembled from trimer-clustered units and there are holes in the capsid shells that allow for the diffusion of macromolecules. CA also has nucleocapsid-like chaperone activity, promoting primer tRNA(i)-Met annealing to the multipartite primer-binding site (PBS), dimerization of Ty1 RNA and initiation of reverse transcription. The aspartyl protease (PR) mediates the proteolytic cleavages of the Gag and Gag-Pol polyproteins after assembly of the VLP. Functionally, reverse transcriptase/ribonuclease H (RT) is a multifunctional enzyme that catalyzes the conversion of the retro-elements RNA genome into dsDNA within the VLP. The enzyme displays a DNA polymerase activity that can copy either DNA or RNA templates, and a ribonuclease H (RNase H) activity that cleaves the RNA strand of RNA-DNA heteroduplexes during plus-strand synthesis and hydrolyzes RNA primers. The conversion leads to a linear dsDNA copy of the retrotransposon that includes long terminal repeats (LTRs) at both ends. In terms of biological role, integrase (IN) targets the VLP to the nucleus, where a subparticle preintegration complex (PIC) containing at least integrase and the newly synthesized dsDNA copy of the retrotransposon must transit the nuclear membrane. Once in the nucleus, integrase performs the integration of the dsDNA into the host genome. This is Transposon Ty1-LR2 Gag-Pol polyprotein (TY1B-LR2) from Saccharomyces cerevisiae (strain ATCC 204508 / S288c) (Baker's yeast).